Here is a 368-residue protein sequence, read N- to C-terminus: tRNA/tmRNA (uracil-C(5))-methyltransferase (368 aa).

The S-adenosyl-L-methionine site is built by Gln-192, Tyr-220, Asn-225, Glu-241, and Asp-301. Catalysis depends on Cys-326, which acts as the Nucleophile. The active-site Proton acceptor is Glu-360.

It belongs to the class I-like SAM-binding methyltransferase superfamily. RNA M5U methyltransferase family. TrmA subfamily.

The enzyme catalyses uridine(54) in tRNA + S-adenosyl-L-methionine = 5-methyluridine(54) in tRNA + S-adenosyl-L-homocysteine + H(+). It catalyses the reaction uridine(341) in tmRNA + S-adenosyl-L-methionine = 5-methyluridine(341) in tmRNA + S-adenosyl-L-homocysteine + H(+). Functionally, dual-specificity methyltransferase that catalyzes the formation of 5-methyluridine at position 54 (m5U54) in all tRNAs, and that of position 341 (m5U341) in tmRNA (transfer-mRNA). In Actinobacillus pleuropneumoniae serotype 7 (strain AP76), this protein is tRNA/tmRNA (uracil-C(5))-methyltransferase.